Reading from the N-terminus, the 62-residue chain is Pro-MCH variant (62 aa).

The NGE-like stretch occupies residues Gly-23–Glu-41. Residues Pro-28–Asp-62 are disordered. An NEI-like region spans residues Glu-44 to Ile-56. The segment at Asp-60–Asp-62 is melanin-concentrating hormone-like.

This sequence belongs to the melanin-concentrating hormone family.

The polypeptide is Pro-MCH variant (PMCHL1) (Hylobates lar (Lar gibbon)).